The following is a 149-amino-acid chain: Large ribosomal subunit protein uL22 (149 aa).

The protein belongs to the universal ribosomal protein uL22 family. Part of the 50S ribosomal subunit.

Functionally, this protein binds specifically to 23S rRNA. It makes multiple contacts with different domains of the 23S rRNA in the assembled 50S subunit and ribosome. Its function is as follows. The globular domain of the protein is located near the polypeptide exit tunnel on the outside of the subunit, while an extended beta-hairpin is found that lines the wall of the exit tunnel in the center of the 70S ribosome. The sequence is that of Large ribosomal subunit protein uL22 from Picrophilus torridus (strain ATCC 700027 / DSM 9790 / JCM 10055 / NBRC 100828 / KAW 2/3).